A 763-amino-acid chain; its full sequence is Autophagy-related protein 18f (763 aa).

WD repeat units follow at residues A345–R385 and F402–A441. The segment covering N701–T711 has biased composition (polar residues). The interval N701–D763 is disordered. 2 stretches are compositionally biased toward basic and acidic residues: residues Q712 to E725 and P741 to S754.

This sequence belongs to the WD repeat PROPPIN family. As to quaternary structure, component of the PI(3,5)P2 regulatory complex at least composed of ATG18, SAC/FIG4, FAB1 and VAC14. In terms of tissue distribution, expressed in roots, flowers and leaves.

It localises to the preautophagosomal structure membrane. The protein localises to the vacuole membrane. Functionally, the PI(3,5)P2 regulatory complex regulates both the synthesis and turnover of phosphatidylinositol 3,5-bisphosphate (PtdIns(3,5)P2). Required for autophagy. This chain is Autophagy-related protein 18f (ATG18F), found in Arabidopsis thaliana (Mouse-ear cress).